The sequence spans 282 residues: Probable protein phosphatase 2C 10 (282 aa).

In terms of domain architecture, PPM-type phosphatase spans K34 to L281. Positions 71, 72, 233, and 272 each coordinate Mn(2+).

It belongs to the PP2C family. The cofactor is Mg(2+). It depends on Mn(2+) as a cofactor.

The enzyme catalyses O-phospho-L-seryl-[protein] + H2O = L-seryl-[protein] + phosphate. It catalyses the reaction O-phospho-L-threonyl-[protein] + H2O = L-threonyl-[protein] + phosphate. The sequence is that of Probable protein phosphatase 2C 10 from Arabidopsis thaliana (Mouse-ear cress).